Reading from the N-terminus, the 294-residue chain is MECPAPDATDAADPGEAGPYKGSEEPEGREPDGVRFDRERARRLWEAVSGAQPAGREEVEHMIQKNQCLFTSTQCKVCCAMLISESQKLAHYQSKKHANKVKRYLAIHGMETIKGDVKRLDSDQKSSRSKDKNHCCPICNMTFSSPAVAQSHYLGKTHAKSLKLKQQSTKGAALQQNREMLDPDKFCSLCHSTFNDPAMAQQHYMGKRHRKQETKLKLMAHYGRLADPAVSDLPAGKGYPCKTCKIVLNSIEQYQAHVSGFKHKNQSPKTLVTLGSQTPVQTQPTPKDSSTVQD.

An N-acetylmethionine modification is found at Met-1. The segment covering 1–19 (MECPAPDATDAADPGEAGP) has biased composition (low complexity). A disordered region spans residues 1 to 35 (MECPAPDATDAADPGEAGPYKGSEEPEGREPDGVR). The span at 22–35 (GSEEPEGREPDGVR) shows a compositional bias: basic and acidic residues. Residues 70-104 (FTSTQCKVCCAMLISESQKLAHYQSKKHANKVKRY) form a Matrin-type 1 zinc finger. Zn(2+) is bound by residues Cys-75, Cys-78, His-91, and His-97. Residue Lys-114 forms a Glycyl lysine isopeptide (Lys-Gly) (interchain with G-Cter in SUMO2) linkage. The Matrin-type 2 zinc finger occupies 131–165 (DKNHCCPICNMTFSSPAVAQSHYLGKTHAKSLKLK). Zn(2+) is bound by residues Cys-136, Cys-139, His-152, and His-158. Residue Lys-170 forms a Glycyl lysine isopeptide (Lys-Gly) (interchain with G-Cter in SUMO2) linkage. 2 Matrin-type zinc fingers span residues 182–216 (DPDK…ETKL) and 236–270 (GKGY…SPKT). The segment at 269–294 (KTLVTLGSQTPVQTQPTPKDSSTVQD) is disordered.

Forms a heteromeric complex with XPO5 and ILF3. Found in a nuclear export complex with XPO5, RAN, ILF3, ZNF346 and double-stranded RNA. Interacts with XPO5. Interacts with ILF3 in an RNA-independent manner. Expressed in all tissues tested, including heart, brain, spleen, lung, liver, muscle, kidney and testis. Exogenous expression induced apoptosis.

It localises to the nucleus. The protein resides in the nucleolus. Its subcellular location is the cytoplasm. Functionally, binds with low affinity to dsDNA and ssRNA, and with high affinity to dsRNA, with no detectable sequence specificity. May bind to specific miRNA hairpins. The sequence is that of Zinc finger protein 346 (Znf346) from Mus musculus (Mouse).